The sequence spans 304 residues: UTP--glucose-1-phosphate uridylyltransferase 1 (304 aa).

It belongs to the UDPGP type 2 family.

The enzyme catalyses alpha-D-glucose 1-phosphate + UTP + H(+) = UDP-alpha-D-glucose + diphosphate. The protein operates within carbohydrate metabolism; nucleotide-sugar metabolism. In Streptococcus pyogenes serotype M18 (strain MGAS8232), this protein is UTP--glucose-1-phosphate uridylyltransferase 1 (hasC1).